Reading from the N-terminus, the 136-residue chain is Histone H3.2 (136 aa).

The disordered stretch occupies residues 1-43 (MARTKQTARKSTGGKAPRKQLATKAARKSAPATGGVKKPHRFR). Residue K5 is modified to N6-methylated lysine. K10 is modified (N6-acetyllysine; alternate). At K10 the chain carries N6-methylated lysine; alternate. Phosphoserine is present on S11. Position 12 is a phosphothreonine (T12). K15 is subject to N6-acetyllysine. K19 and K24 each carry N6-acetyllysine; alternate. K19 and K24 each carry N6-methylated lysine; alternate. Residue K28 is modified to N6-methylated lysine. Residue S29 is modified to Phosphoserine. An N6-methylated lysine modification is found at K37.

The protein belongs to the histone H3 family. As to quaternary structure, the nucleosome is a histone octamer containing two molecules each of H2A, H2B, H3 and H4 assembled in one H3-H4 heterotetramer and two H2A-H2B heterodimers. The octamer wraps approximately 147 bp of DNA. Post-translationally, acetylation is generally linked to gene activation. Can be acetylated to form H3K9ac, H3K14ac, H3K18ac and H3K23ac. H3K9ac could compete with H3K9me and prevent gene silencing. H3K9ac is restricted to euchromatin. Methylated to form mainly H3K4me, H3K9me, H3K18me, H3K23me, H3K27me and H3K36me. H3K4me1/2/3, H3K9me3, H3K27me3 and H3K36me1/2/3 are typical marks for euchromatin, whereas heterochromatic chromocenters are enriched in H3K9me1/2 and H3K27me1/2. H2BK143ub1 is probably prerequisite for H3K4me. In terms of processing, can be phosphorylated to form H3S10ph, H3T11ph and H3S28ph.

It is found in the nucleus. Its subcellular location is the chromosome. Functionally, core component of nucleosome. Nucleosomes wrap and compact DNA into chromatin, limiting DNA accessibility to the cellular machineries which require DNA as a template. Histones thereby play a central role in transcription regulation, DNA repair, DNA replication and chromosomal stability. DNA accessibility is regulated via a complex set of post-translational modifications of histones, also called histone code, and nucleosome remodeling. The protein is Histone H3.2 of Triticum aestivum (Wheat).